The following is a 678-amino-acid chain: Translation factor GUF1 homolog, chloroplastic (678 aa).

A chloroplast-targeting transit peptide spans 1-43 (MASILLSLNTHTLLPLHTRTRTTKTTLKILRFSHKLPPSSPFY). Residues 81-262 (KNIRNFCIIA…AIVERVPPPR (182 aa)) enclose the tr-type G domain. GTP is bound by residues 90 to 97 (AHIDHGKS), 155 to 159 (DTPGH), and 209 to 212 (NKID).

It belongs to the TRAFAC class translation factor GTPase superfamily. Classic translation factor GTPase family. LepA subfamily.

Its subcellular location is the plastid. It localises to the chloroplast. The catalysed reaction is GTP + H2O = GDP + phosphate + H(+). Its function is as follows. Promotes chloroplast protein synthesis. May act as a fidelity factor of the translation reaction, by catalyzing a one-codon backward translocation of tRNAs on improperly translocated ribosomes. The chain is Translation factor GUF1 homolog, chloroplastic from Populus trichocarpa (Western balsam poplar).